A 320-amino-acid polypeptide reads, in one-letter code: Short-chain dehydrogenase TIC 32 A, chloroplastic (320 aa).

NADP(+)-binding positions include 40–46 (GGTSGIG), 92–93 (DL), asparagine 119, and threonine 140. Serine 174 is a binding site for substrate. Catalysis depends on tyrosine 196, which acts as the Proton acceptor. An interaction with calmodulin region spans residues 301–317 (DTTLADKLWDFSIKLVE).

This sequence belongs to the short-chain dehydrogenases/reductases (SDR) family. Part of the Tic complex. Expressed in the dehiscence zone of developing pods.

It localises to the plastid. The protein localises to the chloroplast inner membrane. Involved in protein precursor import into chloroplasts. Maybe involved in pod abscission or dehiscence (pod shatter). In Brassica napus (Rape), this protein is Short-chain dehydrogenase TIC 32 A, chloroplastic.